The primary structure comprises 338 residues: Glycerol-3-phosphate dehydrogenase [NAD(P)+] (338 aa).

The NADPH site is built by S18, Y19, H39, and K113. Sn-glycerol 3-phosphate is bound by residues K113, G142, and T144. A146 is an NADPH binding site. Residues K198, D251, S261, R262, and N263 each contribute to the sn-glycerol 3-phosphate site. K198 acts as the Proton acceptor in catalysis. R262 serves as a coordination point for NADPH. Residues V286 and E288 each coordinate NADPH.

Belongs to the NAD-dependent glycerol-3-phosphate dehydrogenase family.

The protein localises to the cytoplasm. It carries out the reaction sn-glycerol 3-phosphate + NAD(+) = dihydroxyacetone phosphate + NADH + H(+). The enzyme catalyses sn-glycerol 3-phosphate + NADP(+) = dihydroxyacetone phosphate + NADPH + H(+). Its pathway is membrane lipid metabolism; glycerophospholipid metabolism. In terms of biological role, catalyzes the reduction of the glycolytic intermediate dihydroxyacetone phosphate (DHAP) to sn-glycerol 3-phosphate (G3P), the key precursor for phospholipid synthesis. The polypeptide is Glycerol-3-phosphate dehydrogenase [NAD(P)+] (Photobacterium profundum (strain SS9)).